The following is a 338-amino-acid chain: Ketol-acid reductoisomerase (NADP(+)) (338 aa).

Positions 1–181 (MNVYYDKDCD…GGGRSGIIET (181 aa)) constitute a KARI N-terminal Rossmann domain. Residues 24 to 27 (YGSQ), Arg47, Ser50, Ser52, and 82 to 85 (DEFQ) contribute to the NADP(+) site. His107 is an active-site residue. Gly133 contacts NADP(+). A KARI C-terminal knotted domain is found at 182-327 (TFKDETETDL…AKLRGMMPWI (146 aa)). Asp190, Glu194, Glu226, and Glu230 together coordinate Mg(2+). Position 251 (Ser251) interacts with substrate.

It belongs to the ketol-acid reductoisomerase family. It depends on Mg(2+) as a cofactor.

It catalyses the reaction (2R)-2,3-dihydroxy-3-methylbutanoate + NADP(+) = (2S)-2-acetolactate + NADPH + H(+). The enzyme catalyses (2R,3R)-2,3-dihydroxy-3-methylpentanoate + NADP(+) = (S)-2-ethyl-2-hydroxy-3-oxobutanoate + NADPH + H(+). Its pathway is amino-acid biosynthesis; L-isoleucine biosynthesis; L-isoleucine from 2-oxobutanoate: step 2/4. It participates in amino-acid biosynthesis; L-valine biosynthesis; L-valine from pyruvate: step 2/4. Functionally, involved in the biosynthesis of branched-chain amino acids (BCAA). Catalyzes an alkyl-migration followed by a ketol-acid reduction of (S)-2-acetolactate (S2AL) to yield (R)-2,3-dihydroxy-isovalerate. In the isomerase reaction, S2AL is rearranged via a Mg-dependent methyl migration to produce 3-hydroxy-3-methyl-2-ketobutyrate (HMKB). In the reductase reaction, this 2-ketoacid undergoes a metal-dependent reduction by NADPH to yield (R)-2,3-dihydroxy-isovalerate. In Psychrobacter arcticus (strain DSM 17307 / VKM B-2377 / 273-4), this protein is Ketol-acid reductoisomerase (NADP(+)).